Reading from the N-terminus, the 230-residue chain is Lactate utilization protein C (230 aa).

Belongs to the LutC/YkgG family.

Is involved in L-lactate degradation and allows cells to grow with lactate as the sole carbon source. The protein is Lactate utilization protein C of Halalkalibacterium halodurans (strain ATCC BAA-125 / DSM 18197 / FERM 7344 / JCM 9153 / C-125) (Bacillus halodurans).